The sequence spans 126 residues: Glycine cleavage system H protein (126 aa).

Positions 22–104 (VAYVGITDYA…YGEGWLIKMK (83 aa)) constitute a Lipoyl-binding domain. Residue Lys63 is modified to N6-lipoyllysine.

The protein belongs to the GcvH family. As to quaternary structure, the glycine cleavage system is composed of four proteins: P, T, L and H. The cofactor is (R)-lipoate.

In terms of biological role, the glycine cleavage system catalyzes the degradation of glycine. The H protein shuttles the methylamine group of glycine from the P protein to the T protein. The chain is Glycine cleavage system H protein from Bacteroides fragilis (strain YCH46).